The sequence spans 479 residues: Poly(A) polymerase catalytic subunit (479 aa).

Residues Asp202 and Asp204 contribute to the active site. Residues Asp202, Asp204, and Asp253 each contribute to the Ca(2+) site.

This sequence belongs to the poxviridae poly(A) polymerase catalytic subunit family. In terms of assembly, heterodimer of a large (catalytic) subunit and a small (regulatory) subunit.

The catalysed reaction is RNA(n) + ATP = RNA(n)-3'-adenine ribonucleotide + diphosphate. Its function is as follows. Polymerase that creates the 3'-poly(A) tail of mRNA's. This is Poly(A) polymerase catalytic subunit (OPG063) from Cowpox virus (strain GRI-90 / Grishak) (CPV).